The following is a 692-amino-acid chain: Methionine--tRNA ligase (692 aa).

Positions P15–H25 match the 'HIGH' region motif. The Zn(2+) site is built by C146, C149, C159, and C162. The 'KMSKS' region signature appears at K332–S336. K335 is a binding site for ATP. Residues T552–P577 are disordered. Over residues A556–E566 the composition is skewed to basic and acidic residues. The tRNA-binding domain maps to D591–K692.

The protein belongs to the class-I aminoacyl-tRNA synthetase family. MetG type 1 subfamily. Homodimer. Zn(2+) is required as a cofactor.

Its subcellular location is the cytoplasm. The enzyme catalyses tRNA(Met) + L-methionine + ATP = L-methionyl-tRNA(Met) + AMP + diphosphate. In terms of biological role, is required not only for elongation of protein synthesis but also for the initiation of all mRNA translation through initiator tRNA(fMet) aminoacylation. The chain is Methionine--tRNA ligase from Shewanella sediminis (strain HAW-EB3).